Consider the following 276-residue polypeptide: Putative aliphatic sulfonates transport permease protein SsuC (276 aa).

7 helical membrane-spanning segments follow: residues 32–52 (GLLL…LGVV), 54–74 (ATVL…ILSG), 87–107 (AALG…LAGF), 119–141 (LQML…FGFD), 146–168 (ILLI…IRGV), 199–219 (ILLG…VAEL), and 242–262 (VFAG…FVRL). In terms of domain architecture, ABC transmembrane type-1 spans 80–260 (LQISIYRAAL…VVGKLTDSFV (181 aa)).

Belongs to the binding-protein-dependent transport system permease family. CysTW subfamily.

The protein resides in the cell membrane. Part of a binding-protein-dependent transport system for aliphatic sulfonates. Probably responsible for the translocation of the substrate across the membrane. The sequence is that of Putative aliphatic sulfonates transport permease protein SsuC (ssuC) from Bacillus subtilis (strain 168).